We begin with the raw amino-acid sequence, 307 residues long: Elongation factor Ts (307 aa).

The tract at residues 79–82 (TDFV) is involved in Mg(2+) ion dislocation from EF-Tu.

It belongs to the EF-Ts family.

The protein resides in the cytoplasm. Its function is as follows. Associates with the EF-Tu.GDP complex and induces the exchange of GDP to GTP. It remains bound to the aminoacyl-tRNA.EF-Tu.GTP complex up to the GTP hydrolysis stage on the ribosome. In Bartonella henselae (strain ATCC 49882 / DSM 28221 / CCUG 30454 / Houston 1) (Rochalimaea henselae), this protein is Elongation factor Ts.